The following is a 493-amino-acid chain: MTELNKLTVADSIKGLKNKDFTSAELIGAHIKQIEKHRNLNAYVTETFDLALKQAEAADQNYAQNNARTLEGIPFAAKDLFCTKGIRTTACSNILKNFIPNYESSVTQNIFDKGGVMLGKTNMDEFAMGSANITSCFGNVISPWKANDDNADLVPGGSSGGSAAAVSGFMASAALGSDTGGSVRQPASFTGLVGFKPTYGRCSRYGMISFASSLDQAGIFTRSVLDSSIMLEAMMGFDEKDSTSIKAEVPELQSAIGSSMKNMKMGVPLSLGEGSIIEPDIMKMWQDTIELLKNAGAEIVDITLPHAKYGVAVYYVIAPAEASSNLSRYDGVRYGLRVERENMTLDEMYEMTRSTGFGEEVKRRIMIGTYVLSSSGMDAYYLKAQKVRRLVANDFNNAFAKVDAILLPTSPTAAFKIGEKQNDPTIMYLNDLFTIPASLAGLPCASVPAGLSARGLPLGIQIIGKQLDEYTVLKVASTIESGVKHIKFEPKGF.

Catalysis depends on charge relay system residues K78 and S158. Residue S182 is the Acyl-ester intermediate of the active site.

It belongs to the amidase family. GatA subfamily. As to quaternary structure, heterotrimer of A, B and C subunits.

It carries out the reaction L-glutamyl-tRNA(Gln) + L-glutamine + ATP + H2O = L-glutaminyl-tRNA(Gln) + L-glutamate + ADP + phosphate + H(+). Functionally, allows the formation of correctly charged Gln-tRNA(Gln) through the transamidation of misacylated Glu-tRNA(Gln) in organisms which lack glutaminyl-tRNA synthetase. The reaction takes place in the presence of glutamine and ATP through an activated gamma-phospho-Glu-tRNA(Gln). In Rickettsia rickettsii (strain Iowa), this protein is Glutamyl-tRNA(Gln) amidotransferase subunit A.